Reading from the N-terminus, the 185-residue chain is Ribosome-recycling factor (185 aa).

The protein belongs to the RRF family.

It localises to the cytoplasm. Its function is as follows. Responsible for the release of ribosomes from messenger RNA at the termination of protein biosynthesis. May increase the efficiency of translation by recycling ribosomes from one round of translation to another. This chain is Ribosome-recycling factor, found in Vibrio cholerae serotype O1 (strain ATCC 39541 / Classical Ogawa 395 / O395).